The chain runs to 540 residues: V-set and immunoglobulin domain-containing protein 10 (540 aa).

The N-terminal stretch at methionine 1 to alanine 30 is a signal peptide. Ig-like C2-type domains follow at residues valine 31 to valine 119, proline 123 to threonine 215, proline 223 to arginine 309, and proline 311 to serine 404. Residues valine 31–glycine 413 are Extracellular-facing. N-linked (GlcNAc...) asparagine glycosylation is found at asparagine 39, asparagine 46, asparagine 70, asparagine 108, asparagine 138, asparagine 171, asparagine 180, and asparagine 198. Cysteines 44 and 103 form a disulfide. 2 cysteine pairs are disulfide-bonded: cysteine 153-cysteine 201 and cysteine 245-cysteine 290. Asparagine 326 carries N-linked (GlcNAc...) asparagine glycosylation. Cysteine 331 and cysteine 388 are joined by a disulfide. A helical transmembrane segment spans residues isoleucine 414–leucine 434. Residues histidine 435–valine 540 are Cytoplasmic-facing. Residues aspartate 461–alanine 477 show a composition bias toward acidic residues. 2 disordered regions span residues aspartate 461–isoleucine 500 and glutamine 513–valine 540. Residues glutamate 482 to isoleucine 500 show a composition bias toward basic and acidic residues. The segment covering leucine 521–glutamine 534 has biased composition (acidic residues).

It is found in the membrane. The polypeptide is V-set and immunoglobulin domain-containing protein 10 (VSIG10) (Homo sapiens (Human)).